Here is a 188-residue protein sequence, read N- to C-terminus: Putative 3-methyladenine DNA glycosylase (188 aa).

The protein belongs to the DNA glycosylase MPG family.

This is Putative 3-methyladenine DNA glycosylase from Ehrlichia ruminantium (Cowdria ruminantium).